A 547-amino-acid chain; its full sequence is Chaperonin GroEL (547 aa).

ATP is bound by residues 30 to 33 (TLGP), Lys51, 87 to 91 (DGTTT), Gly415, 479 to 481 (NAA), and Asp495. The segment at 524 to 547 (APKKDEPTPPAAGGGMGGMGGMDF) is disordered. The segment covering 535 to 547 (AGGGMGGMGGMDF) has biased composition (gly residues).

It belongs to the chaperonin (HSP60) family. As to quaternary structure, forms a cylinder of 14 subunits composed of two heptameric rings stacked back-to-back. Interacts with the co-chaperonin GroES.

The protein localises to the cytoplasm. The catalysed reaction is ATP + H2O + a folded polypeptide = ADP + phosphate + an unfolded polypeptide.. In terms of biological role, together with its co-chaperonin GroES, plays an essential role in assisting protein folding. The GroEL-GroES system forms a nano-cage that allows encapsulation of the non-native substrate proteins and provides a physical environment optimized to promote and accelerate protein folding. The protein is Chaperonin GroEL of Xylella fastidiosa (strain M23).